A 109-amino-acid chain; its full sequence is Putative gametogenetin-binding protein 1 (109 aa).

The interval 24 to 109 (KAFRSTDTVG…KGEMGNWPPE (86 aa)) is interaction with GGN.

Interacts with CCDC159. Interacts with GGN.

The protein resides in the cytoplasm. The protein localises to the membrane. Its subcellular location is the golgi apparatus. Functionally, may be involved in spermatogenesis. This Homo sapiens (Human) protein is Putative gametogenetin-binding protein 1 (GGNBP1).